The following is a 230-amino-acid chain: Leucyl/phenylalanyl-tRNA--protein transferase (230 aa).

The protein belongs to the L/F-transferase family.

The protein localises to the cytoplasm. It catalyses the reaction N-terminal L-lysyl-[protein] + L-leucyl-tRNA(Leu) = N-terminal L-leucyl-L-lysyl-[protein] + tRNA(Leu) + H(+). The catalysed reaction is N-terminal L-arginyl-[protein] + L-leucyl-tRNA(Leu) = N-terminal L-leucyl-L-arginyl-[protein] + tRNA(Leu) + H(+). The enzyme catalyses L-phenylalanyl-tRNA(Phe) + an N-terminal L-alpha-aminoacyl-[protein] = an N-terminal L-phenylalanyl-L-alpha-aminoacyl-[protein] + tRNA(Phe). In terms of biological role, functions in the N-end rule pathway of protein degradation where it conjugates Leu, Phe and, less efficiently, Met from aminoacyl-tRNAs to the N-termini of proteins containing an N-terminal arginine or lysine. The chain is Leucyl/phenylalanyl-tRNA--protein transferase from Proteus mirabilis (strain HI4320).